The sequence spans 537 residues: Biotin carboxylase, chloroplastic (537 aa).

Residues 1-71 (MDASMITNSK…ATSGGLGVTC (71 aa)) constitute a chloroplast transit peptide. ATP-binding positions include lysine 188, lysine 230, 236–237 (GG), 272–275 (EKFV), and histidine 280. Residues 192 to 389 (RETMKNAGVP…LIEEQIRVAM (198 aa)) enclose the ATP-grasp domain. Residue lysine 309 coordinates hydrogencarbonate. Glutamate 347 and glutamate 360 together coordinate ATP. Mg(2+)-binding residues include glutamate 347, glutamate 360, and asparagine 362. Mn(2+) is bound by residues glutamate 347, glutamate 360, and asparagine 362. Hydrogencarbonate is bound by residues arginine 364, valine 367, and arginine 410. Residue arginine 364 is part of the active site. Arginine 410 is a binding site for biotin.

Acetyl-CoA carboxylase is a heterohexamer composed of biotin carboxyl carrier protein, biotin carboxylase and two subunits each of ACCase subunit alpha and ACCase plastid-coded subunit beta (accD). Requires Mg(2+) as cofactor. Mn(2+) serves as cofactor. As to expression, accumulates in fatty acids synthesizing tissues. Mostly expressed in siliques, developing leaves, and flowers, present in roots and embryos (especially at torpedo stage), and, to a lower extent, in mature leaves.

It localises to the plastid. The protein resides in the chloroplast. It catalyses the reaction N(6)-biotinyl-L-lysyl-[protein] + hydrogencarbonate + ATP = N(6)-carboxybiotinyl-L-lysyl-[protein] + ADP + phosphate + H(+). The protein operates within lipid metabolism; malonyl-CoA biosynthesis; malonyl-CoA from acetyl-CoA: step 1/1. In terms of biological role, this protein is a component of the acetyl coenzyme A carboxylase complex; first, biotin carboxylase catalyzes the carboxylation of the carrier protein and then the transcarboxylase transfers the carboxyl group to form malonyl-CoA. The protein is Biotin carboxylase, chloroplastic (CAC2) of Arabidopsis thaliana (Mouse-ear cress).